Reading from the N-terminus, the 356-residue chain is Staphylococcal superantigen-like 3 (356 aa).

The signal sequence occupies residues 1 to 30 (MKMRTIAKTSLALGLLTTGAITVTTQSVKA). A disordered region spans residues 61 to 165 (ATTQAANTRQ…TIKQAQTDMT (105 aa)). Residues 69-104 (RQERTPKLEKAPNTNEEKTSASKIEKISQPKQEEQK) show a composition bias toward basic and acidic residues. Residues 114–141 (PKQEQSQTTTESTTPKTKVTTPPSTNTP) show a composition bias toward low complexity. The segment covering 142 to 164 (QPMQSTKSDTPQSPTIKQAQTDM) has biased composition (polar residues). Residues 228 to 326 (IDVFIVLEDN…VIKMKNGGKY (99 aa)) are sialyl Lewis X-binding.

It belongs to the staphylococcal/streptococcal toxin family. As to quaternary structure, interacts with host TLR2 (via its extracellular domain).

It is found in the secreted. Its function is as follows. Secreted protein that plays an essential role in immune innate response inhibition by interacting with and inhibiting host TLR2. In turn, bacteria recognition by immune cells is impaired and cytokine production is inhibited. Mechanistically, by interacting with TLR2, blocks ligand binding and thus inhibits activation. Second, by interacting with an already formed TLR2-lipopeptide complex, prevents TLR heterodimerization and downstream signaling. The interaction with host TLR2 does not involve sialyl Lewis X interactions. The protein is Staphylococcal superantigen-like 3 of Staphylococcus aureus (strain NCTC 8325 / PS 47).